We begin with the raw amino-acid sequence, 336 residues long: MTALSSKNCSLQYQLHQSPQLLEASCLLFLIILGKVLLNILLLRVRRGDARWTLMEYFCFSLALVDLLLLVNISILTYFRDFVVLGIRFTRYHICLLTQIISFTYGFLHYPVCSLACIDYWCNLSRASKQSSRWQKLLYFLTVILTWISVLAYVLVDPAISVSLKAHRGYVYQCPAYVSTQSHWLSLSMLMVLFVAFLISWQEVVALLQAMRIASYKSKAALYFPFPLHCGYALSCREALLPRLIVCFLGTWFPFVALQVLILSLRVQIPAYIEMNVPWLYFVNSFLIAAVYWFNCHKLDLRDSSLPVDPFINWKCCFVPVHRLKQVERPMSIVIC.

Residues 1–20 (MTALSSKNCSLQYQLHQSPQ) are Extracellular-facing. The N-linked (GlcNAc...) asparagine glycan is linked to Asn-8. A helical membrane pass occupies residues 21-41 (LLEASCLLFLIILGKVLLNIL). Residues 42-56 (LLRVRRGDARWTLME) are Cytoplasmic-facing. The chain crosses the membrane as a helical span at residues 57 to 77 (YFCFSLALVDLLLLVNISILT). At 78 to 95 (YFRDFVVLGIRFTRYHIC) the chain is on the extracellular side. Residues 96-116 (LLTQIISFTYGFLHYPVCSLA) traverse the membrane as a helical segment. At 117-136 (CIDYWCNLSRASKQSSRWQK) the chain is on the cytoplasmic side. Residues 137 to 157 (LLYFLTVILTWISVLAYVLVD) traverse the membrane as a helical segment. Residues 158-186 (PAISVSLKAHRGYVYQCPAYVSTQSHWLS) lie on the Extracellular side of the membrane. The chain crosses the membrane as a helical span at residues 187–207 (LSMLMVLFVAFLISWQEVVAL). Over 208–243 (LQAMRIASYKSKAALYFPFPLHCGYALSCREALLPR) the chain is Cytoplasmic. Residues 244 to 264 (LIVCFLGTWFPFVALQVLILS) form a helical membrane-spanning segment. Residues 265–272 (LRVQIPAY) lie on the Extracellular side of the membrane. Residues 273-293 (IEMNVPWLYFVNSFLIAAVYW) form a helical membrane-spanning segment. At 294 to 336 (FNCHKLDLRDSSLPVDPFINWKCCFVPVHRLKQVERPMSIVIC) the chain is on the cytoplasmic side.

It belongs to the G-protein coupled receptor 1 family.

It localises to the cell membrane. Its function is as follows. Orphan receptor. This is Probable G-protein coupled receptor 160 (Gpr160) from Mus musculus (Mouse).